Consider the following 1699-residue polypeptide: Hybrid signal transduction histidine kinase E (1699 aa).

2 disordered regions span residues 1–32 (MDKLKINNNLSPPSSPSSSTTTPNLSSTNLEN) and 58–97 (NNIIINNNNNNNNNNNNNNNNNNNNSNNNNNNINNNNPNV). Positions 7–32 (NNNLSPPSSPSSSTTTPNLSSTNLEN) are enriched in low complexity. The next 6 membrane-spanning stretches (helical) occupy residues 142 to 162 (CILLGECGVYVFIYMFFLIFL), 164 to 184 (SFYPIFICGIVSMIVLYIVST), 191 to 211 (LVALIYIFVQSILNFTFFLQI), 238 to 258 (LNFLFIMNLILSLISIQIFFP), 262 to 282 (FSITLTCSLNIFNIIIHLISI), and 295 to 315 (NLIVPITVSFLLSFYSYILSI). The segment covering 412–432 (ITNGGNNKQTSTTSANSTPRY) has biased composition (polar residues). Disordered stretches follow at residues 412–439 (ITNGGNNKQTSTTSANSTPRYNNYNNNN) and 542–593 (LLNN…NISN). Low complexity predominate over residues 544–593 (NNNNNNNNNNNNNNNNNNNNNNNNNNSNNNNNNNSNNNNNNNNINNNISN). A Histidine kinase domain is found at 678–950 (TVSHEVRTPI…AFSFTSILST (273 aa)). At histidine 681 the chain carries Phosphohistidine; by autocatalysis. Disordered regions lie at residues 819–866 (NNNN…NNNN), 1018–1054 (NNNNNNNNNNNNNNNNNNNNNNNNDNNNNNNNNNDNN), 1186–1239 (KKQQ…RKSS), 1252–1294 (MVQV…NPNN), and 1351–1406 (SIPI…SPPP). A compositionally biased stretch (polar residues) spans 1198–1212 (MGDTLSSTKSPQYTN). Positions 1219-1239 (SSSSNGSLNKSNRSNLLRKSS) are enriched in low complexity. A compositionally biased stretch (polar residues) spans 1271-1282 (KGNNSNPNSTEL). 2 stretches are compositionally biased toward low complexity: residues 1283–1294 (NSTNSVNGNPNN) and 1355–1392 (NINNNDNNNNNNNNNNNNNNNNNNNNNNNNNNNNNNNN). Positions 1575–1695 (NALIVDDTEL…TLKDTLLKWG (121 aa)) constitute a Response regulatory domain. Residue aspartate 1625 is modified to 4-aspartylphosphate.

The protein localises to the membrane. The catalysed reaction is ATP + protein L-histidine = ADP + protein N-phospho-L-histidine.. Functionally, may act in a signal transduction pathway. This protein undergoes an ATP-dependent autophosphorylation at a conserved histidine residue in the kinase core, and a phosphoryl group is then transferred to a conserved aspartate residue in the receiver domain. This chain is Hybrid signal transduction histidine kinase E (dhkE), found in Dictyostelium discoideum (Social amoeba).